Reading from the N-terminus, the 708-residue chain is Tryptophan synthase (708 aa).

Positions 1-305 (MEGIKQTFQR…EADIDAQLAA (305 aa)) are tryptophan synthase alpha chain. Active-site proton acceptor residues include E49 and D60. The interval 306 to 708 (LHGTIPKRFG…GPKIGWDLRF (403 aa)) is tryptophan synthase beta chain. At K392 the chain carries N6-(pyridoxal phosphate)lysine.

In the N-terminal section; belongs to the TrpA family. The protein in the C-terminal section; belongs to the TrpB family. Pyridoxal 5'-phosphate is required as a cofactor.

The catalysed reaction is (1S,2R)-1-C-(indol-3-yl)glycerol 3-phosphate + L-serine = D-glyceraldehyde 3-phosphate + L-tryptophan + H2O. It participates in amino-acid biosynthesis; L-tryptophan biosynthesis; L-tryptophan from chorismate: step 5/5. This is Tryptophan synthase (trp-3) from Neurospora crassa (strain ATCC 24698 / 74-OR23-1A / CBS 708.71 / DSM 1257 / FGSC 987).